The chain runs to 153 residues: Large ribosomal subunit protein uL30 (153 aa).

This sequence belongs to the universal ribosomal protein uL30 family. Part of the 50S ribosomal subunit.

This is Large ribosomal subunit protein uL30 from Methanospirillum hungatei JF-1 (strain ATCC 27890 / DSM 864 / NBRC 100397 / JF-1).